Consider the following 263-residue polypeptide: Lens fiber major intrinsic protein (263 aa).

Topologically, residues 1 to 9 (MWELRSASF) are cytoplasmic. A helical transmembrane segment spans residues 10–29 (WRAIFAEFFATLFYVFFGLG). At 30–41 (SSLRWAPGPLHV) the chain is on the extracellular side. A helical transmembrane segment spans residues 42-59 (LQVAMAFGLALATLVQSV). Over 60–61 (GH) the chain is Cytoplasmic. The discontinuously helical intramembrane region spans 62 to 77 (ISGAHVNPAVTFAFLV). The NPA 1 motif lies at 68–70 (NPA). Over 78–82 (GSQMS) the chain is Cytoplasmic. The chain crosses the membrane as a helical span at residues 83–106 (LLRAFCYMAAQLLGAVAGAAVLYS). The Extracellular segment spans residues 107–127 (VTPPAVRGNLALNTLHPAVSV). Residues 128–148 (GQATTVEIFLTLQFVLCIFAT) traverse the membrane as a helical segment. Residues 149–156 (YDERRNGQ) lie on the Cytoplasmic side of the membrane. A helical transmembrane segment spans residues 157–175 (LGSVALAVGFSLALGHLFG). The Extracellular portion of the chain corresponds to 176–178 (MYY). The segment at residues 179 to 193 (TGAGMNPARSFAPAI) is an intramembrane region (discontinuously helical). An NPA 2 motif is present at residues 184–186 (NPA). The Extracellular portion of the chain corresponds to 194 to 200 (LTGNFTN). The chain crosses the membrane as a helical span at residues 201-222 (HWVYWVGPIIGGGLGSLLYDFL). At 223–263 (LFPRLKSISERLSVLKGAKPDVSNGQPEVTGEPVELNTQAL) the chain is on the cytoplasmic side. An interaction with CALM region spans residues 227 to 237 (LKSISERLSVL). S235 and S245 each carry phosphoserine. Residues N246 and N259 each carry the deamidated asparagine; by deterioration modification.

Belongs to the MIP/aquaporin (TC 1.A.8) family. As to quaternary structure, homotetramer; each monomer provides an independent water pore. Two homotetramers on opposing membranes can dimerize, forming a cell-cell junction. Interacts with CALM; the calcium-calmodulin/CALM complex interacts with the cytoplasmic domains of two aquaporins, leading to channel closure. Interacts with BFSP1 (via C-terminus); prevents calcium-dependent inhibition of the water channel activity. Post-translationally, subject to partial proteolytic cleavage in the eye lens core. Partial proteolysis promotes interactions between tetramers from adjoining membranes. In terms of processing, fatty acylated at Met-1 and Lys-238. The acyl modifications, in decreasing order of ion abundance, are: oleoyl (C18:1) &gt; palmitoyl (C16:0) &gt; stearoyl (C18:0) &gt; eicosenoyl (C20:1) &gt; dihomo-gamma-linolenoyl (C20:3) &gt; palmitoleoyl (C16:1) &gt; eicosadienoyl (C20:2). Expressed in the cortex and nucleus of the retina lens (at protein level). Major component of lens fiber gap junctions.

It localises to the cell membrane. Its subcellular location is the cell junction. It catalyses the reaction H2O(in) = H2O(out). With respect to regulation, the water channel activity is inhibited by calcium through calmodulin/CALM. Functionally, aquaporins form homotetrameric transmembrane channels, with each monomer independently mediating water transport across the plasma membrane along its osmotic gradient. Specifically expressed in lens fiber cells, this aquaporin is crucial for maintaining lens water homeostasis and transparency. Beyond water permeability, it also acts as a cell-to-cell adhesion molecule, forming thin junctions between lens fiber cells that are essential for maintaining the ordered structure and transparency of the lens. In Homo sapiens (Human), this protein is Lens fiber major intrinsic protein.